A 174-amino-acid chain; its full sequence is Crossover junction endodeoxyribonuclease RuvC (174 aa).

Catalysis depends on residues D8, E67, and D139. Mg(2+) contacts are provided by D8, E67, and D139.

The protein belongs to the RuvC family. In terms of assembly, homodimer which binds Holliday junction (HJ) DNA. The HJ becomes 2-fold symmetrical on binding to RuvC with unstacked arms; it has a different conformation from HJ DNA in complex with RuvA. In the full resolvosome a probable DNA-RuvA(4)-RuvB(12)-RuvC(2) complex forms which resolves the HJ. Mg(2+) serves as cofactor.

Its subcellular location is the cytoplasm. It catalyses the reaction Endonucleolytic cleavage at a junction such as a reciprocal single-stranded crossover between two homologous DNA duplexes (Holliday junction).. Its function is as follows. The RuvA-RuvB-RuvC complex processes Holliday junction (HJ) DNA during genetic recombination and DNA repair. Endonuclease that resolves HJ intermediates. Cleaves cruciform DNA by making single-stranded nicks across the HJ at symmetrical positions within the homologous arms, yielding a 5'-phosphate and a 3'-hydroxyl group; requires a central core of homology in the junction. The consensus cleavage sequence is 5'-(A/T)TT(C/G)-3'. Cleavage occurs on the 3'-side of the TT dinucleotide at the point of strand exchange. HJ branch migration catalyzed by RuvA-RuvB allows RuvC to scan DNA until it finds its consensus sequence, where it cleaves and resolves the cruciform DNA. This chain is Crossover junction endodeoxyribonuclease RuvC, found in Pseudomonas syringae pv. syringae (strain B728a).